Here is a 615-residue protein sequence, read N- to C-terminus: Homologous recombination OB-fold protein (615 aa).

Disordered stretches follow at residues 42–75 (LRPV…PRLC), 213–326 (PWPS…PVTQ), and 546–590 (DFLE…FPEE). S47 is subject to Phosphoserine. Composition is skewed to polar residues over residues 47–71 (SRPQ…NQSV), 232–241 (SCVSTSQQRG), and 257–275 (IRSS…SPRA). Over residues 302-317 (SSRAPVSSVESPVSTP) the composition is skewed to low complexity.

In terms of assembly, interacts with MCM8; this interaction is necessary for MCM8-MCM9 helicase complex recruitment to DNA damage sites. Interacts with RPA1; this interaction associates HROB with the RPA complex.

The protein resides in the nucleus. It localises to the chromosome. Its function is as follows. DNA-binding protein involved in homologous recombination that acts by recruiting the MCM8-MCM9 helicase complex to sites of DNA damage to promote DNA repair synthesis. The chain is Homologous recombination OB-fold protein from Mus musculus (Mouse).